We begin with the raw amino-acid sequence, 504 residues long: Probable cytochrome P450 513E1 (504 aa).

Residues 1–21 traverse the membrane as a helical segment; sequence MNLYISILILIISLIIFFKNN. Residue C450 participates in heme binding.

Belongs to the cytochrome P450 family. Heme is required as a cofactor.

It is found in the membrane. The chain is Probable cytochrome P450 513E1 (cyp513E1) from Dictyostelium discoideum (Social amoeba).